Reading from the N-terminus, the 490-residue chain is Bifunctional protein HldE (490 aa).

A ribokinase region spans residues 1 to 330 (MDRTNIENFL…EAMAHHALEY (330 aa)). Position 205–208 (205–208 (NRKE)) interacts with ATP. D275 is an active-site residue. Positions 356-490 (FTNGCFDLLH…ERILDRYEQG (135 aa)) are cytidylyltransferase.

This sequence in the N-terminal section; belongs to the carbohydrate kinase PfkB family. It in the C-terminal section; belongs to the cytidylyltransferase family. In terms of assembly, homodimer.

It catalyses the reaction D-glycero-beta-D-manno-heptose 7-phosphate + ATP = D-glycero-beta-D-manno-heptose 1,7-bisphosphate + ADP + H(+). The catalysed reaction is D-glycero-beta-D-manno-heptose 1-phosphate + ATP + H(+) = ADP-D-glycero-beta-D-manno-heptose + diphosphate. The protein operates within nucleotide-sugar biosynthesis; ADP-L-glycero-beta-D-manno-heptose biosynthesis; ADP-L-glycero-beta-D-manno-heptose from D-glycero-beta-D-manno-heptose 7-phosphate: step 1/4. It participates in nucleotide-sugar biosynthesis; ADP-L-glycero-beta-D-manno-heptose biosynthesis; ADP-L-glycero-beta-D-manno-heptose from D-glycero-beta-D-manno-heptose 7-phosphate: step 3/4. Functionally, catalyzes the phosphorylation of D-glycero-D-manno-heptose 7-phosphate at the C-1 position to selectively form D-glycero-beta-D-manno-heptose-1,7-bisphosphate. Its function is as follows. Catalyzes the ADP transfer from ATP to D-glycero-beta-D-manno-heptose 1-phosphate, yielding ADP-D-glycero-beta-D-manno-heptose. The polypeptide is Bifunctional protein HldE (Syntrophotalea carbinolica (strain DSM 2380 / NBRC 103641 / GraBd1) (Pelobacter carbinolicus)).